A 600-amino-acid polypeptide reads, in one-letter code: Glutamine--fructose-6-phosphate aminotransferase [isomerizing] (600 aa).

The active-site Nucleophile; for GATase activity is Cys2. The Glutamine amidotransferase type-2 domain occupies 2 to 217 (CGIVGYIGYQ…DGELVIVTSE (216 aa)). 2 SIS domains span residues 283-422 (IINE…AKGF) and 452-590 (IASD…VDKP). Residue Lys595 is the For Fru-6P isomerization activity of the active site.

In terms of assembly, homodimer.

It localises to the cytoplasm. It carries out the reaction D-fructose 6-phosphate + L-glutamine = D-glucosamine 6-phosphate + L-glutamate. Functionally, catalyzes the first step in hexosamine metabolism, converting fructose-6P into glucosamine-6P using glutamine as a nitrogen source. The chain is Glutamine--fructose-6-phosphate aminotransferase [isomerizing] from Geobacillus kaustophilus (strain HTA426).